The primary structure comprises 181 residues: Acireductone dioxygenase (181 aa).

Histidine 98, histidine 100, glutamate 104, and histidine 142 together coordinate Fe(2+). Histidine 98, histidine 100, glutamate 104, and histidine 142 together coordinate Ni(2+).

The protein belongs to the acireductone dioxygenase (ARD) family. Monomer. Fe(2+) is required as a cofactor. It depends on Ni(2+) as a cofactor.

The catalysed reaction is 1,2-dihydroxy-5-(methylsulfanyl)pent-1-en-3-one + O2 = 3-(methylsulfanyl)propanoate + CO + formate + 2 H(+). The enzyme catalyses 1,2-dihydroxy-5-(methylsulfanyl)pent-1-en-3-one + O2 = 4-methylsulfanyl-2-oxobutanoate + formate + 2 H(+). It participates in amino-acid biosynthesis; L-methionine biosynthesis via salvage pathway; L-methionine from S-methyl-5-thio-alpha-D-ribose 1-phosphate: step 5/6. Catalyzes 2 different reactions between oxygen and the acireductone 1,2-dihydroxy-3-keto-5-methylthiopentene (DHK-MTPene) depending upon the metal bound in the active site. Fe-containing acireductone dioxygenase (Fe-ARD) produces formate and 2-keto-4-methylthiobutyrate (KMTB), the alpha-ketoacid precursor of methionine in the methionine recycle pathway. Ni-containing acireductone dioxygenase (Ni-ARD) produces methylthiopropionate, carbon monoxide and formate, and does not lie on the methionine recycle pathway. This chain is Acireductone dioxygenase, found in Synechococcus sp. (strain ATCC 27144 / PCC 6301 / SAUG 1402/1) (Anacystis nidulans).